A 1032-amino-acid chain; its full sequence is Serine/threonine-protein kinase ppk31 (1032 aa).

Residues Asn-3–Ser-72 form the PAS domain. In terms of domain architecture, Protein kinase spans Phe-528–Phe-877. Residues Ile-534 to Val-542 and Lys-557 each bind ATP. Catalysis depends on Asp-652, which acts as the Proton acceptor. Residues Pro-938–Thr-963 are disordered. Low complexity predominate over residues Thr-947–Ala-957.

This sequence belongs to the protein kinase superfamily. Ser/Thr protein kinase family.

It is found in the cytoplasm. The enzyme catalyses L-seryl-[protein] + ATP = O-phospho-L-seryl-[protein] + ADP + H(+). It carries out the reaction L-threonyl-[protein] + ATP = O-phospho-L-threonyl-[protein] + ADP + H(+). Has a role in meiosis. In Schizosaccharomyces pombe (strain 972 / ATCC 24843) (Fission yeast), this protein is Serine/threonine-protein kinase ppk31 (ppk31).